A 190-amino-acid polypeptide reads, in one-letter code: Putative 3-methyladenine DNA glycosylase (190 aa).

This sequence belongs to the DNA glycosylase MPG family.

In Deinococcus radiodurans (strain ATCC 13939 / DSM 20539 / JCM 16871 / CCUG 27074 / LMG 4051 / NBRC 15346 / NCIMB 9279 / VKM B-1422 / R1), this protein is Putative 3-methyladenine DNA glycosylase.